The following is a 90-amino-acid chain: Probable Fe(2+)-trafficking protein (90 aa).

The protein belongs to the Fe(2+)-trafficking protein family.

Functionally, could be a mediator in iron transactions between iron acquisition and iron-requiring processes, such as synthesis and/or repair of Fe-S clusters in biosynthetic enzymes. The polypeptide is Probable Fe(2+)-trafficking protein (Paracidovorax citrulli (strain AAC00-1) (Acidovorax citrulli)).